The primary structure comprises 460 residues: Putative 2,3-dihydroxypropane-1-sulfonate exporter (460 aa).

Over 1–18 (MSQTSSNPATLRLPFKEK) the chain is Cytoplasmic. The chain crosses the membrane as a helical span at residues 19–39 (LAYGLGDLGSNILLDIGTLYL). Residues 40 to 46 (LKFYTDV) are Periplasmic-facing. The helical transmembrane segment at 47 to 67 (LGLPGTYGGIIFLIAKFFTAF) threads the bilayer. At 68–91 (TDMGTGIMLDSRRKIGPKGKFRPF) the chain is on the cytoplasmic side. Residues 92-112 (VLYAAFPVTLLAIANFVGTPF) form a helical membrane-spanning segment. Over 113–122 (EVTGKTVVAT) the chain is Periplasmic. The helical transmembrane segment at 123-143 (MLFMLYGLVFSMMNCSYGAMV) threads the bilayer. Residues 144 to 161 (PAITKNPDERASLAAWRQ) lie on the Cytoplasmic side of the membrane. A helical membrane pass occupies residues 162-182 (GGATLGLLLCTVGFVPVMNLI). Topologically, residues 183 to 190 (EGNAQLSY) are periplasmic. A helical membrane pass occupies residues 191-211 (IFAATLFSLFGLLFMWLCYAG). Topologically, residues 212-242 (VKERYVEVKPVDSAQKPGLLQSFRAIAGNRP) are cytoplasmic. The chain crosses the membrane as a helical span at residues 243-263 (LFILCIANLCTLGAFNVKLAI). The Periplasmic segment spans residues 264 to 275 (QVYYTQYVLNDP). A helical membrane pass occupies residues 276 to 296 (ILLSWMGFFSMGCIFIGVFLM). Over 297-307 (PGAVRRFGKKK) the chain is Cytoplasmic. The chain crosses the membrane as a helical span at residues 308 to 328 (VYIGGLLIWVAGDLLNYFFGG). A topological domain (periplasmic) is located at residue Gly-329. A helical transmembrane segment spans residues 330 to 350 (SVSFVAFSCLAFFGSAFVNSL). At 351-386 (NWALVSDTVEYGEWRTGVRSEGTVYTGFTFFRKVSQ) the chain is on the cytoplasmic side. The helical transmembrane segment at 387 to 407 (ALAGFFPGWMLTQIGYIPNVV) threads the bilayer. The Periplasmic portion of the chain corresponds to 408–418 (QSAGTVEGLRQ). A helical membrane pass occupies residues 419–439 (LIFIYPCVLAVITIIAMGCFY). The Cytoplasmic portion of the chain corresponds to 440–460 (NLNEKMYVRIVEEIEARKHTV).

The protein belongs to the sodium:galactoside symporter (TC 2.A.2) family.

The protein resides in the cell inner membrane. Its function is as follows. Could be involved in the export of 2,3-dihydroxypropane-1-sulfonate (DHPS). In Salmonella typhimurium (strain LT2 / SGSC1412 / ATCC 700720), this protein is Putative 2,3-dihydroxypropane-1-sulfonate exporter (yihP).